A 281-amino-acid polypeptide reads, in one-letter code: 33 kDa chaperonin (281 aa).

2 disulfide bridges follow: C229–C231 and C262–C265.

Belongs to the HSP33 family. In terms of processing, under oxidizing conditions two disulfide bonds are formed involving the reactive cysteines. Under reducing conditions zinc is bound to the reactive cysteines and the protein is inactive.

It localises to the cytoplasm. Its function is as follows. Redox regulated molecular chaperone. Protects both thermally unfolding and oxidatively damaged proteins from irreversible aggregation. Plays an important role in the bacterial defense system toward oxidative stress. The polypeptide is 33 kDa chaperonin (Pseudoalteromonas translucida (strain TAC 125)).